The following is a 199-amino-acid chain: NAD(P)H dehydrogenase (quinone) (199 aa).

The Flavodoxin-like domain occupies 4 to 190; sequence MLVLYYSAYG…DGARFQGRRV (187 aa). FMN is bound by residues 10–15 and 78–80; these read SAYGYM and TRY. Residue Y12 participates in NAD(+) binding. W98 lines the substrate pocket. FMN-binding positions include 113-119 and H134; that span reads STATQHG. The segment at 157-181 is disordered; the sequence is GGAPYGMTTTADGDGSRQPSAQELD. Polar residues predominate over residues 163 to 177; the sequence is MTTTADGDGSRQPSA.

It belongs to the WrbA family. The cofactor is FMN.

It carries out the reaction a quinone + NADH + H(+) = a quinol + NAD(+). It catalyses the reaction a quinone + NADPH + H(+) = a quinol + NADP(+). This chain is NAD(P)H dehydrogenase (quinone), found in Brucella melitensis biotype 2 (strain ATCC 23457).